Reading from the N-terminus, the 204-residue chain is High frequency lysogenization protein HflD homolog (204 aa).

The protein belongs to the HflD family.

It localises to the cytoplasm. Its subcellular location is the cell inner membrane. In Xanthomonas axonopodis pv. citri (strain 306), this protein is High frequency lysogenization protein HflD homolog.